The primary structure comprises 449 residues: Monoacylglycerol lipase (449 aa).

K82 is covalently cross-linked (Glycyl lysine isopeptide (Lys-Gly) (interchain with G-Cter in ubiquitin)). The region spanning 151–392 is the AB hydrolase-1 domain; that stretch reads PMLIILHGLT…LLLETSTGGH (242 aa). The GXSXG motif lies at 230 to 234; it reads GFSLG. S232 serves as the catalytic Nucleophile. Active-site charge relay system residues include D364 and H392.

The protein belongs to the AB hydrolase superfamily. AB hydrolase 4 family.

The enzyme catalyses Hydrolyzes glycerol monoesters of long-chain fatty acids.. The catalysed reaction is 1-hexadecanoylglycerol + H2O = glycerol + hexadecanoate + H(+). It carries out the reaction 1-octadecanoylglycerol + H2O = octadecanoate + glycerol + H(+). It catalyses the reaction 1-(9Z-octadecenoyl)-glycerol + H2O = glycerol + (9Z)-octadecenoate + H(+). Converts monoacylglycerides (MAG) to free fatty acids and glycerol. Has a preference for palmitoyl-MAG. Does not play a significant role in ethyl ester biosynthesis. Also possesses ester hydrolase and low but persistent TAG lipase activity. This chain is Monoacylglycerol lipase, found in Saccharomyces cerevisiae (strain ATCC 204508 / S288c) (Baker's yeast).